A 1018-amino-acid chain; its full sequence is Putative type I restriction enzyme MjaVIIIP endonuclease subunit (1018 aa).

Belongs to the HsdR family. As to quaternary structure, the type I restriction/modification system is composed of three polypeptides R, M and S.

The catalysed reaction is Endonucleolytic cleavage of DNA to give random double-stranded fragments with terminal 5'-phosphates, ATP is simultaneously hydrolyzed.. Functionally, the restriction (R) subunit of a type I restriction enzyme that recognizes 5'-GAYN(5)GTAA-3' and cleaves a random distance away. The R subunit is required for both endonuclease and ATPase activities but not for modification. After locating a non-methylated recognition site, the enzyme complex serves as a molecular motor that translocates DNA in an ATP-dependent manner until a collision occurs that triggers cleavage. The protein is Putative type I restriction enzyme MjaVIIIP endonuclease subunit of Methanocaldococcus jannaschii (strain ATCC 43067 / DSM 2661 / JAL-1 / JCM 10045 / NBRC 100440) (Methanococcus jannaschii).